A 436-amino-acid polypeptide reads, in one-letter code: Cytochrome b5-related protein (436 aa).

The Cytochrome b5 heme-binding domain maps to 16–100 (PTYRNSALIT…IAKYKVRDAA (85 aa)). 2 residues coordinate heme: histidine 59 and histidine 82.

As to expression, muscle.

In terms of biological role, may play a role in muscle cell metabolism. The polypeptide is Cytochrome b5-related protein (Cyt-b5-r) (Drosophila melanogaster (Fruit fly)).